A 290-amino-acid chain; its full sequence is Proteasome subunit beta (290 aa).

The propeptide at 1-58 (MTTSGGLTGPGAFGRLPQPFHQPGITSFVEFLALQAPDLLPGRLQMPAGGQPPEVPHG) is removed in mature form; by autocatalysis. Thr-59 acts as the Nucleophile in catalysis.

This sequence belongs to the peptidase T1B family. The 20S proteasome core is composed of 14 alpha and 14 beta subunits that assemble into four stacked heptameric rings, resulting in a barrel-shaped structure. The two inner rings, each composed of seven catalytic beta subunits, are sandwiched by two outer rings, each composed of seven alpha subunits. The catalytic chamber with the active sites is on the inside of the barrel. Has a gated structure, the ends of the cylinder being occluded by the N-termini of the alpha-subunits. Is capped by the proteasome-associated ATPase, ARC.

It is found in the cytoplasm. The enzyme catalyses Cleavage of peptide bonds with very broad specificity.. The protein operates within protein degradation; proteasomal Pup-dependent pathway. The formation of the proteasomal ATPase ARC-20S proteasome complex, likely via the docking of the C-termini of ARC into the intersubunit pockets in the alpha-rings, may trigger opening of the gate for substrate entry. Interconversion between the open-gate and close-gate conformations leads to a dynamic regulation of the 20S proteasome proteolysis activity. Functionally, component of the proteasome core, a large protease complex with broad specificity involved in protein degradation. The protein is Proteasome subunit beta of Acidothermus cellulolyticus (strain ATCC 43068 / DSM 8971 / 11B).